The following is a 1735-amino-acid chain: Cadherin-AgCad1 (1735 aa).

The N-terminal stretch at 1 to 30 (MKCVASKFNMWLHLGWLLGLLLVLLPLVRC) is a signal peptide. Over 31 to 1574 (QGWGEPRFET…ALTEADETLQ (1544 aa)) the chain is Extracellular. An extracellular domain (EC) region spans residues 166–1456 (VTDCLFNVYH…KVYIVSESNR (1291 aa)). Cadherin domains are found at residues 171–273 (FNVY…PPIF), 280–378 (ERIM…IPEI), 379–498 (YMKP…VPKF), 499–620 (GRDE…PPQI), 621–757 (TLPR…APYF), 767–866 (SVKE…QPYH), 879–983 (EKIP…TPKL), 985–1109 (ELAA…TPSI), 1136–1235 (GSPL…EPTF), 1255–1350 (AEDP…PPVF), and 1351–1461 (QQRL…TFVF). 2 consecutive short sequence motifs (toxin-binding receptor motif) follow at residues 1344–1350 (NDNPPVF) and 1446–1456 (AKVYIVSESNR). The segment at 1358 to 1569 (GITTNDRVPK…PLATEALTEA (212 aa)) is CR11-MPED, increases toxicity of activated Cry4B toxin, peptide alone is not toxic. Positions 1457 to 1569 (VTFVFLNSVE…PLATEALTEA (113 aa)) are membrane-proximal EC domain (MPED). Residues 1575–1595 (IILIVVSAALAVLCVILFVAF) form a helical membrane-spanning segment. Over 1596 to 1735 (FIKIRSLNRQ…ETDDELSHRF (140 aa)) the chain is Cytoplasmic. The segment covering 1701-1719 (SLNPMANGTDKSNDGAPTS) has biased composition (polar residues). The disordered stretch occupies residues 1701 to 1735 (SLNPMANGTDKSNDGAPTSNHKKLDETDDELSHRF). Over residues 1722–1735 (KKLDETDDELSHRF) the composition is skewed to basic and acidic residues.

In terms of tissue distribution, larval midgut (at protein level).

It localises to the apical cell membrane. The protein localises to the cell projection. It is found in the microvillus membrane. Cadherins are calcium-dependent cell adhesion proteins. They preferentially interact with themselves in a homophilic manner in connecting cells. Its function is as follows. (Microbial infection) Binds to and is probably the functional receptor for B.thuringiensis subsp. israelensis (Bti) insecticidal toxin Cry4B. Trichoplusia ni insect cells stably transfected with this protein become suspectible to Cry4B; cells undergo oncosis, they bleb and ruffle after 20-40 minutes, swell after 40-60 minutes and lyse after 90 minutes. Following toxin treatment in the T.in insect system levels of intracellular 3',5'-cyclic AMP (cAMP) rise 12.5-fold; EDTA but not EGTA pretreatment prevents cAMP increase. Inorganic phosphate also rises 3.4-fold after toxin treatment. The sequence is that of Cadherin-AgCad1 from Anopheles gambiae (African malaria mosquito).